The chain runs to 137 residues: Large ribosomal subunit protein uL16 (137 aa).

This sequence belongs to the universal ribosomal protein uL16 family. Part of the 50S ribosomal subunit.

Its function is as follows. Binds 23S rRNA and is also seen to make contacts with the A and possibly P site tRNAs. The protein is Large ribosomal subunit protein uL16 of Halorhodospira halophila (strain DSM 244 / SL1) (Ectothiorhodospira halophila (strain DSM 244 / SL1)).